The sequence spans 239 residues: Sugar fermentation stimulation protein homolog (239 aa).

Belongs to the SfsA family.

The polypeptide is Sugar fermentation stimulation protein homolog (Synechococcus sp. (strain JA-3-3Ab) (Cyanobacteria bacterium Yellowstone A-Prime)).